A 53-amino-acid chain; its full sequence is Conotoxin Bu27 (53 aa).

The propeptide occupies 1-12 (ASDGRNAVVHER). The residue at position 14 (proline 14) is a 4-hydroxyproline. Glutamate 15 is subject to 4-carboxyglutamate. Residues threonine 19 and threonine 21 are each glycosylated (O-linked (HexNAc...) threonine). 4-hydroxyproline occurs at positions 29, 34, 35, 43, 44, and 48. Proline 48 bears the Proline amide mark. Positions 49 to 53 (GRRND) are excised as a propeptide.

Belongs to the conotoxin A superfamily. Contains 3 disulfide bonds. As to expression, expressed by the venom duct.

It is found in the secreted. In terms of biological role, probable neurotoxin with ion channel inhibitor activity. This chain is Conotoxin Bu27, found in Conus bullatus (Bubble cone).